The sequence spans 107 residues: Nucleoid-associated protein Lferr_1592 (107 aa).

Belongs to the YbaB/EbfC family. Homodimer.

The protein resides in the cytoplasm. It is found in the nucleoid. Functionally, binds to DNA and alters its conformation. May be involved in regulation of gene expression, nucleoid organization and DNA protection. This is Nucleoid-associated protein Lferr_1592 from Acidithiobacillus ferrooxidans (strain ATCC 53993 / BNL-5-31) (Leptospirillum ferrooxidans (ATCC 53993)).